Reading from the N-terminus, the 422-residue chain is Gamma-glutamyl phosphate reductase (422 aa).

It belongs to the gamma-glutamyl phosphate reductase family.

The protein localises to the cytoplasm. The enzyme catalyses L-glutamate 5-semialdehyde + phosphate + NADP(+) = L-glutamyl 5-phosphate + NADPH + H(+). Its pathway is amino-acid biosynthesis; L-proline biosynthesis; L-glutamate 5-semialdehyde from L-glutamate: step 2/2. Catalyzes the NADPH-dependent reduction of L-glutamate 5-phosphate into L-glutamate 5-semialdehyde and phosphate. The product spontaneously undergoes cyclization to form 1-pyrroline-5-carboxylate. The chain is Gamma-glutamyl phosphate reductase from Shewanella piezotolerans (strain WP3 / JCM 13877).